A 796-amino-acid chain; its full sequence is YY1-associated protein 1 (796 aa).

2 disordered regions span residues 1-45 and 463-488; these read MEEE…ATPS and IQPSPSLQPSFNPGKTPAQSTHSEAP. Basic and acidic residues predominate over residues 23–36; the sequence is PPDKREGSAVDPGK. The segment covering 463-472 has biased composition (low complexity); the sequence is IQPSPSLQPS. Positions 473-485 are enriched in polar residues; the sequence is FNPGKTPAQSTHS. Ser-724 is modified (phosphoserine). The segment at 755 to 776 is disordered; sequence RQALEPLPQGIQESLNNSSPGD. Residues 765 to 774 are compositionally biased toward polar residues; it reads IQESLNNSSP.

Interacts with YY1. Interacts with MAD2L2. Interacts with INO80. As to expression, ubiquitous. Detected in small intestine, skeletal muscle, lung, pancreas, brain, stomach, spleen, colon and heart. Detected at very low levels in healthy liver. Highly expressed in most liver carcinomas.

Its subcellular location is the cytoplasm. It is found in the nucleus. The protein localises to the nucleoplasm. It localises to the nucleolus. Its function is as follows. Associates with the INO80 chromatin remodeling complex, which is responsible for transcriptional regulation, DNA repair, and replication. Enhances transcription activation by YY1. Plays a role in cell cycle regulation. The sequence is that of YY1-associated protein 1 from Homo sapiens (Human).